A 256-amino-acid polypeptide reads, in one-letter code: Small ribosomal subunit protein uS3 (256 aa).

Residues isoleucine 39–arginine 111 form the KH type-2 domain. The disordered stretch occupies residues aspartate 219–aspartate 256. Positions aspartate 240 to asparagine 250 are enriched in low complexity.

It belongs to the universal ribosomal protein uS3 family. Part of the 30S ribosomal subunit. Forms a tight complex with proteins S10 and S14.

Functionally, binds the lower part of the 30S subunit head. Binds mRNA in the 70S ribosome, positioning it for translation. The polypeptide is Small ribosomal subunit protein uS3 (Acholeplasma laidlawii (strain PG-8A)).